We begin with the raw amino-acid sequence, 78 residues long: Large ribosomal subunit protein eL20 (78 aa).

It belongs to the eukaryotic ribosomal protein eL20 family. As to quaternary structure, part of the 50S ribosomal subunit. Binds 23S rRNA.

This Pyrobaculum aerophilum (strain ATCC 51768 / DSM 7523 / JCM 9630 / CIP 104966 / NBRC 100827 / IM2) protein is Large ribosomal subunit protein eL20.